The chain runs to 306 residues: ClpXP adapter protein SpxH (306 aa).

Belongs to the SpxH family. In terms of assembly, interacts with Spx.

It is found in the cytoplasm. In terms of biological role, adapter protein required for efficient degradation of Spx by ClpXP under non-stress conditions. Interaction with Spx stabilizes Spx and exposes the C-terminus of Spx for recognition and proteolysis by ClpXP. This Halalkalibacterium halodurans (strain ATCC BAA-125 / DSM 18197 / FERM 7344 / JCM 9153 / C-125) (Bacillus halodurans) protein is ClpXP adapter protein SpxH.